We begin with the raw amino-acid sequence, 441 residues long: Protein eva-1 homolog C (441 aa).

A disordered region spans residues 1–23; that stretch reads MLLPGPARQPPTPQPVQHPGLRR. A signal peptide spans 1–48; it reads MLLPGPARQPPTPQPVQHPGLRRQVEPPGQLLRLFYCTVLVCSKEISA. Positions 7–16 are enriched in pro residues; sequence ARQPPTPQPV. Residues 49-322 are Extracellular-facing; the sequence is LTDFSGYLTK…AYIRAHPERA (274 aa). The N-linked (GlcNAc...) asparagine glycan is linked to Asn-62. The SUEL-type lectin 1 domain occupies 67–159; sequence ACDGDYLNLQ…KYLLVSFKCQ (93 aa). Asn-165 carries N-linked (GlcNAc...) asparagine glycosylation. The region spanning 168-260 is the SUEL-type lectin 2 domain; it reads VCEDQELKLH…KYLTVTYACV (93 aa). The chain crosses the membrane as a helical span at residues 323–343; that stretch reads ALLFVSSVCIGLALTLCALVI. Residues 344–441 are Cytoplasmic-facing; sequence RESCAKDFRD…SLPRNMGQFY (98 aa). Residues 362–391 form a disordered region; that stretch reads VPGSDKVEEDSEDEEEEEDSSESDFPGELS. Positions 368–383 are enriched in acidic residues; that stretch reads VEEDSEDEEEEEDSSE.

It belongs to the EVA1 family.

Its subcellular location is the cell membrane. Its function is as follows. Binds heparin. This is Protein eva-1 homolog C (EVA1C) from Pan troglodytes (Chimpanzee).